We begin with the raw amino-acid sequence, 161 residues long: Pleiotrophin-A (161 aa).

An N-terminal signal peptide occupies residues M1 to G23. Cystine bridges form between C41–C70, C49–C79, C56–C83, C93–C125, and C103–C135. Chondroitin sulfate binding stretches follow at residues K86 to C93 and K117 to C125. The tract at residues G136 to D161 is disordered. The tract at residues P141 to D161 is chondroitin sulfate A binding.

It belongs to the pleiotrophin family. As to expression, expressed in high levels in brain and eye. Lower levels in bone. In the tailbud embryo stage, it is expressed exclusively in the central nervous system, especially in the hind region of the brain.

The protein resides in the secreted. Its function is as follows. Secreted growth factor that mediates its signal through cell-surface proteoglycan and non-proteoglycan receptors. Binds cell-surface proteoglycan receptor via their chondroitin sulfate (CS) groups. Thereby regulates many processes like cell proliferation, cell survival, cell growth, cell differentiation and cell migration. Has antibacterial activity against both Gram-positive and Gram-negative bacteria. The protein is Pleiotrophin-A (ptn-a) of Xenopus laevis (African clawed frog).